The following is a 324-amino-acid chain: MSELKSRIGNSGSIANSGPVSILCYCASSILMTVTNKFVVNTDGFNMFFVMLFAQSLVCTMCLMVLKMFGYAKYRPLNLIDVKNWLPISFLLVFMIFTSAKALKYMPVPIYTIFKNLTIILIAYGEVLFFGGSVTPMELSSFILMVLSSVVASLGDQQAAKIAQPLANNSILSPEYYWMFLNCICSASFVLIMRKRIKLTNFKDYDTMFYNNALALPILLGFSFLSEDWSSENLAQNFSGESLSAMIISGMTSVGISYCSGWCVRATSSTTYSMVGALNKLPIALAGLIFFDAPRNFLSIMSIFIGFASGLSYAVAKQKKVQKN.

Topologically, residues 1–13 (MSELKSRIGNSGS) are cytoplasmic. Residues 14-34 (IANSGPVSILCYCASSILMTV) form a helical membrane-spanning segment. Over 35 to 44 (TNKFVVNTDG) the chain is Lumenal. Residues 45-65 (FNMFFVMLFAQSLVCTMCLMV) traverse the membrane as a helical segment. Over 66 to 76 (LKMFGYAKYRP) the chain is Cytoplasmic. Residues 77–97 (LNLIDVKNWLPISFLLVFMIF) form a helical membrane-spanning segment. Topologically, residues 98–116 (TSAKALKYMPVPIYTIFKN) are lumenal. An N-linked (GlcNAc...) asparagine glycan is attached at asparagine 116. Residues 117-137 (LTIILIAYGEVLFFGGSVTPM) traverse the membrane as a helical segment. Position 138 (glutamate 138) is a topological domain, cytoplasmic. A helical transmembrane segment spans residues 139–159 (LSSFILMVLSSVVASLGDQQA). Topologically, residues 160 to 170 (AKIAQPLANNS) are lumenal. Residue asparagine 168 is glycosylated (N-linked (GlcNAc...) asparagine). The helical transmembrane segment at 171–191 (ILSPEYYWMFLNCICSASFVL) threads the bilayer. The Cytoplasmic portion of the chain corresponds to 192 to 204 (IMRKRIKLTNFKD). A helical membrane pass occupies residues 205–225 (YDTMFYNNALALPILLGFSFL). Residues 226–243 (SEDWSSENLAQNFSGESL) are Lumenal-facing. Asparagine 237 carries an N-linked (GlcNAc...) asparagine glycan. Residues 244–264 (SAMIISGMTSVGISYCSGWCV) form a helical membrane-spanning segment. The Cytoplasmic segment spans residues 265–270 (RATSST). The helical transmembrane segment at 271 to 291 (TYSMVGALNKLPIALAGLIFF) threads the bilayer. The Lumenal portion of the chain corresponds to 292–295 (DAPR). Residues 296-316 (NFLSIMSIFIGFASGLSYAVA) form a helical membrane-spanning segment. The Cytoplasmic portion of the chain corresponds to 317–324 (KQKKVQKN).

This sequence belongs to the TPT transporter family. SLC35D subfamily. Homooligomer.

It localises to the golgi apparatus membrane. The protein localises to the cytoplasmic vesicle membrane. Its subcellular location is the endoplasmic reticulum membrane. Functionally, involved in the import of GDP-mannose from the cytoplasm into the Golgi lumen. The sequence is that of GDP-mannose transporter (VRG4) from Candida glabrata (strain ATCC 2001 / BCRC 20586 / JCM 3761 / NBRC 0622 / NRRL Y-65 / CBS 138) (Yeast).